The chain runs to 87 residues: Small ribosomal subunit protein bS20 (87 aa).

This sequence belongs to the bacterial ribosomal protein bS20 family.

Functionally, binds directly to 16S ribosomal RNA. The chain is Small ribosomal subunit protein bS20 from Alkaliphilus oremlandii (strain OhILAs) (Clostridium oremlandii (strain OhILAs)).